A 178-amino-acid polypeptide reads, in one-letter code: MSEVRLPPLRALDDFVLGSARLVAPDPCDPQRWCHRVINNLLYYQTNYLICFGLGLALAGYVRPLHTLLSALVVAVALGMLVCAAENRAAVRRCRRSHPAACLAAVLAVGFLVLWAAGGAGTFLLSIAGPVLLILVHASLRLRNLKNKIENKIESIGLKRTPMGLLLEALGQEQEAGS.

Residues methionine 1 to leucine 41 lie on the Cytoplasmic side of the membrane. Residues leucine 42–valine 62 traverse the membrane as a helical segment. The Extracellular segment spans residues arginine 63–proline 64. A helical transmembrane segment spans residues leucine 65–alanine 85. Topologically, residues glutamate 86–arginine 96 are cytoplasmic. A helical membrane pass occupies residues serine 97 to glycine 119. Residues alanine 120–threonine 122 are Extracellular-facing. The helical transmembrane segment at phenylalanine 123 to leucine 140 threads the bilayer. Residues arginine 141–serine 178 lie on the Cytoplasmic side of the membrane.

It belongs to the PRA1 family. Interacts with CCR5 and GDE1.

It is found in the endosome membrane. In terms of biological role, may be involved in ER/Golgi transport and vesicular traffic. Plays a proapoptotic role in cerulenin-induced neuroblastoma apoptosis. This Bos taurus (Bovine) protein is PRA1 family protein 2 (PRAF2).